Consider the following 505-residue polypeptide: Glycerol kinase (505 aa).

Threonine 14 is an ADP binding site. Residues threonine 14, threonine 15, and serine 16 each coordinate ATP. Residue threonine 14 participates in sn-glycerol 3-phosphate binding. Arginine 18 serves as a coordination point for ADP. Arginine 84, glutamate 85, tyrosine 136, and aspartate 246 together coordinate sn-glycerol 3-phosphate. Glycerol-binding residues include arginine 84, glutamate 85, tyrosine 136, aspartate 246, and glutamine 247. ADP-binding residues include threonine 268 and glycine 311. Residues threonine 268, glycine 311, glutamine 315, and glycine 412 each contribute to the ATP site. Glycine 412 and asparagine 416 together coordinate ADP.

Belongs to the FGGY kinase family.

The enzyme catalyses glycerol + ATP = sn-glycerol 3-phosphate + ADP + H(+). It participates in polyol metabolism; glycerol degradation via glycerol kinase pathway; sn-glycerol 3-phosphate from glycerol: step 1/1. Its activity is regulated as follows. Inhibited by fructose 1,6-bisphosphate (FBP). Key enzyme in the regulation of glycerol uptake and metabolism. Catalyzes the phosphorylation of glycerol to yield sn-glycerol 3-phosphate. The protein is Glycerol kinase of Vibrio campbellii (strain ATCC BAA-1116).